The sequence spans 728 residues: MSNETKCPFNHTAGGGTTNKDWWPNQLNLNILHRHSALSDPMDKDFDYAEAFKKLDLAAVKKDLHALMTASQDWWPADFGHYGGLFVRMAWHSAGTYRTADGRGGAGGGQQRFAPLNSWPDNVSLDKARRLLWPIKQKYGRNISWADLLILTGNVALESMGFKTFGYAGGRVDTWEPDDVYWGSEKIWLELSGGPNSRYSGKRDLESPLAAVQMGLIYVNPEGPDGTPDPVAAAHDIRETFARMAMNDEETVALIAGGHTFGKTHGAGPASNVGAEPEAAGLEEQGLGWKSTFGTGKGKDAITSGLEVTWTSTPTQWSNDFFKHLFSYEWELTKSPAGAHQWVAKDAGDVIPDAFDASKKHRPTMLTTDLSLRFDPAYEKISRRFYENPAEFADAFARAWFKLTHRDMGPRARYLGPDVPAEHLLWQDPIPAVDHKLIDDADVAALKAKVLASGLSVSQLVSTAWASAATFRGSDKRGGANGARIRLAPQKDWEVNRPAELAKVLATLEGVQKAFNDAQTGGKKVSLADLIVLAGAAGVEQAAKNAGVAVTVPFAPGRADATQEETDIEAMAVLEPVADGFRNFLKHAYQTPAEALLVDKAQLLTLTAPEMTALVGGLRVLGANAGDAKQGVFTDRPEALTNDFFVNLLDMGTEWKPVSAANDVFEGRDRATGQVKWTGSRVDLIFGSHAQLRALAEVYGSADAKEKFAHDFVAAWNKVMNLDRFDLA.

The segment at residues 91 to 218 (WHSAGTYRTA…LAAVQMGLIY (128 aa)) is a cross-link (tryptophyl-tyrosyl-methioninium (Trp-Tyr) (with M-244)). The Proton acceptor role is filled by histidine 92. The segment at residues 218 to 244 (YVNPEGPDGTPDPVAAAHDIRETFARM) is a cross-link (tryptophyl-tyrosyl-methioninium (Tyr-Met) (with W-91)). Position 259 (histidine 259) interacts with heme b.

This sequence belongs to the peroxidase family. Peroxidase/catalase subfamily. Homodimer or homotetramer. Requires heme b as cofactor. Formation of the three residue Trp-Tyr-Met cross-link is important for the catalase, but not the peroxidase activity of the enzyme.

It catalyses the reaction H2O2 + AH2 = A + 2 H2O. The catalysed reaction is 2 H2O2 = O2 + 2 H2O. Its function is as follows. Bifunctional enzyme with both catalase and broad-spectrum peroxidase activity. This is Catalase-peroxidase from Burkholderia lata (strain ATCC 17760 / DSM 23089 / LMG 22485 / NCIMB 9086 / R18194 / 383).